Consider the following 35-residue polypeptide: Malate dehydrogenase, mitochondrial (35 aa).

Asparagine 7 serves as a coordination point for NAD(+). Arginine 23 serves as a coordination point for substrate.

The protein belongs to the LDH/MDH superfamily. MDH type 1 family. Homodimer.

It is found in the mitochondrion matrix. It catalyses the reaction (S)-malate + NAD(+) = oxaloacetate + NADH + H(+). The sequence is that of Malate dehydrogenase, mitochondrial from Capsicum annuum var. annuum (Red pepper).